Reading from the N-terminus, the 309-residue chain is Wall-associated proteinase (309 aa).

Residues Asn-190 and Asn-295 are each glycosylated (N-linked (GlcNAc...) asparagine).

It is found in the secreted. Its subcellular location is the cell wall. The protein localises to the membrane. In terms of biological role, may participate in wall plasticization and/or intussusception or in cell wall turnover. This chain is Wall-associated proteinase, found in Coccidioides immitis (strain RS) (Valley fever fungus).